Consider the following 577-residue polypeptide: Multidrug transporter TPO1_2 (577 aa).

The tract at residues 1 to 63 (MSSTSSDRPY…ALSKNSTQTS (63 aa)) is disordered. Residues asparagine 44 and asparagine 58 are each glycosylated (N-linked (GlcNAc...) asparagine). The next 12 helical transmembrane spans lie at 137-157 (VMLC…SSIF), 167-187 (IYHV…LGFA), 204-224 (GVLV…ATAK), 234-254 (FFAG…FADM), 263-283 (AICL…VIGS), 293-313 (WLEY…LFFF), 368-388 (PLLL…YLLL), 406-426 (ELPY…IWWM), 446-466 (LLPM…FCWT), 475-495 (WIVP…IFLP), 504-526 (YLLI…GAAF), and 541-561 (YAGL…LLFL).

Belongs to the major facilitator superfamily. DHA1 family. Polyamines/proton antiporter (TC 2.A.1.2.16) subfamily.

Its subcellular location is the cell membrane. Functionally, multidrug resistance transporter involved in resistance to azole antifungal drugs such as the imidazoles miconazole, ketoconazole, and tioconazole; as well as the triazoles itraconazole and fluconazole. Also plays a role in the resistance to other antifungal drug families such as the polyene amphotericin B, the pyrimide analog flucytosine, the fungicide mancozeb, and the polyamine spermine. Decreases the intracellular accumulation of clotrimazole by mediating its extrusion from cells. Plays a role in biofilm formation. This chain is Multidrug transporter TPO1_2, found in Candida glabrata (strain ATCC 2001 / BCRC 20586 / JCM 3761 / NBRC 0622 / NRRL Y-65 / CBS 138) (Yeast).